Here is a 326-residue protein sequence, read N- to C-terminus: Probable pectate lyase B (326 aa).

Residues 1-15 (MRVTAILTLATIAIA) form the signal peptide. D133, D162, and D166 together coordinate Ca(2+). Residue R219 is part of the active site.

This sequence belongs to the polysaccharide lyase 1 family. The cofactor is Ca(2+).

The protein localises to the secreted. The catalysed reaction is Eliminative cleavage of (1-&gt;4)-alpha-D-galacturonan to give oligosaccharides with 4-deoxy-alpha-D-galact-4-enuronosyl groups at their non-reducing ends.. Its function is as follows. Pectinolytic enzyme consist of four classes of enzymes: pectin lyase, polygalacturonase, pectin methylesterase and rhamnogalacturonase. Among pectinolytic enzymes, pectin lyase is the most important in depolymerization of pectin, since it cleaves internal glycosidic bonds of highly methylated pectins. Favors pectate, the anion, over pectin, the methyl ester. This is Probable pectate lyase B (plyB) from Aspergillus flavus (strain ATCC 200026 / FGSC A1120 / IAM 13836 / NRRL 3357 / JCM 12722 / SRRC 167).